The primary structure comprises 206 residues: Glycerol-3-phosphate acyltransferase 1 (206 aa).

Transmembrane regions (helical) follow at residues 14–34, 67–87, 91–111, 124–144, and 148–168; these read IALAAAIIGYLFGSIPFGLIL, ATLLLDALKASAAAWVVSYFL, AAIIAGFFAFIGHLFPVWIGF, LLGVAPIMVVLFAAVWLAVAF, and YSSLSALVAMLVIPVALWILG.

Belongs to the PlsY family. Probably interacts with PlsX.

The protein resides in the cell inner membrane. It catalyses the reaction an acyl phosphate + sn-glycerol 3-phosphate = a 1-acyl-sn-glycero-3-phosphate + phosphate. It functions in the pathway lipid metabolism; phospholipid metabolism. Catalyzes the transfer of an acyl group from acyl-phosphate (acyl-PO(4)) to glycerol-3-phosphate (G3P) to form lysophosphatidic acid (LPA). This enzyme utilizes acyl-phosphate as fatty acyl donor, but not acyl-CoA or acyl-ACP. This is Glycerol-3-phosphate acyltransferase 1 from Rhizobium johnstonii (strain DSM 114642 / LMG 32736 / 3841) (Rhizobium leguminosarum bv. viciae).